Reading from the N-terminus, the 237-residue chain is MTPQDFYRTLEEDGFSLSSKQKEQFDTYFKSLVEWNTKINLTAITEENEVYLKHFYDSIAPILQGFLANEPIKLLDIGAGAGFPSLPMKILFPNLEVTIIDSLNKRISFLTLLAQELGLENVHFFHGRAEDFGQDKAFRGQFDVVTARAVARMQVLSELTIPFLKIGGKLIALKAQAADQELEEAKNALCLLFGKVIKNHSYQLPNGDSRFITIVEKKKETPNKYPRKAGLPNKKPL.

S-adenosyl-L-methionine-binding positions include G78, F83, 129 to 130 (AE), and R148.

It belongs to the methyltransferase superfamily. RNA methyltransferase RsmG family.

The protein localises to the cytoplasm. In terms of biological role, specifically methylates the N7 position of a guanine in 16S rRNA. The polypeptide is Ribosomal RNA small subunit methyltransferase G (Streptococcus pyogenes serotype M1).